Consider the following 131-residue polypeptide: UPF0102 protein Ent638_3585 (131 aa).

The tract at residues 1 to 20 is disordered; sequence MAQIPAGADRPGKLSRKQTG.

This sequence belongs to the UPF0102 family.

The polypeptide is UPF0102 protein Ent638_3585 (Enterobacter sp. (strain 638)).